The chain runs to 304 residues: MENHEQTSFTFEIDNFLEKGDAISPIFISGGCEWFIRVWQIEDHLAVTLSVPNLESLRYGWERRTKYSFIVLNQSGRELERTFEVEGLFCTELLEWCHPKVMPTNKLQEVCLENNKLIIEVQVKVLEVVHEGGVTTEKEMFNIEGFDVLYTQVSRVSWLFVEHPNIAVDVRIKNQLVRTAYINVLLGLIETLDRSPRSLSETDLRDAHIELSELTEAGFKVDWLKKKLEEVSLARKNDISDGSQVEELEEHVKNLKLELDNEKIKSSTASERVLLLEKEVLDLKIELDRTRRGQPNLLYLKLRY.

In terms of domain architecture, MATH spans 6–123 (QTSFTFEIDN…NNKLIIEVQV (118 aa)). The stretch at 219–292 (FKVDWLKKKL…LKIELDRTRR (74 aa)) forms a coiled coil.

In Arabidopsis thaliana (Mouse-ear cress), this protein is MATH domain and coiled-coil domain-containing protein At2g42470.